The sequence spans 106 residues: Ribosomal processing cysteine protease Prp (106 aa).

The active-site Proton donor is the His22. The Nucleophile role is filled by Cys34.

The protein belongs to the Prp family. As to quaternary structure, homodimer. A mutant protein unable to cleave bL27 copurifies with its substrate.

With respect to regulation, not inhibited by short peptide analogs; a 6-mer inhibits only 20% while a 13-mer inhibits 63%. Inhibited by Ac-KLNLQFF-CH(2) which binds covalantly to Cys-34. Inhibited by mersalyl acid (C13H18HgNO6). An essential cysteine protease that cleaves the N-terminal 9 amino acids from ribosomal protein bL27. Also acts as an N-terminal protease on the major capsid and scaffold assembly proteins of bacteriophage 80alpha. Cleavage of the N-terminus of bL27 (and thus this enzyme) is essential for growth; it cannot be replaced by a 'pre-cleaved' or non-cleavable form of bL27. Might serve a chaperone function during ribosome assembly. In Staphylococcus aureus (strain NCTC 8325 / PS 47), this protein is Ribosomal processing cysteine protease Prp.